Reading from the N-terminus, the 110-residue chain is Chorion class B protein M2410 (110 aa).

A run of 4 repeats spans residues 1–4, 5–9, 10–14, and 15–19. A 4 X 5 AA tandem repeats of G-Y-G-G-L region spans residues 1–19; it reads YGGLGYGGLGYGGLGYGGL. Positions 1–27 are left arm; it reads YGGLGYGGLGYGGLGYGGLGGGCGRGF. The tract at residues 28–96 is central domain; sequence SGGGLPVATA…GNGDVGITRE (69 aa). The interval 97–110 is right arm (Gly-rich tandem repeats); it reads GGLGYGAGYGGGYG.

Belongs to the chorion protein family.

In terms of biological role, this protein is one of many from the eggshell of the silk moth. In Bombyx mori (Silk moth), this protein is Chorion class B protein M2410.